The sequence spans 321 residues: Large ribosomal subunit protein uL3 (321 aa).

Belongs to the universal ribosomal protein uL3 family. As to quaternary structure, part of the 50S ribosomal subunit. Forms a cluster with proteins L14 and L24e.

One of the primary rRNA binding proteins, it binds directly near the 3'-end of the 23S rRNA, where it nucleates assembly of the 50S subunit. The polypeptide is Large ribosomal subunit protein uL3 (Nanoarchaeum equitans (strain Kin4-M)).